A 207-amino-acid chain; its full sequence is ConoCAP (207 aa).

An N-terminal signal peptide occupies residues 1-21 (MVSLGHVLFVILLPVLLPVAA). A propeptide spanning residues 22–48 (DDPDDQMLSQISLPSSSRSEYDDNDVS) is cleaved from the precursor. Cysteines 53 and 59 form a disulfide. G60 bears the Glycine amide mark. A propeptide spanning residues 63–82 (HRDRSRRQERYGKRLIPVLA) is cleaved from the precursor. C87 and C92 are joined by a disulfide. N94 carries the asparagine amide modification. Positions 98-160 (SLSGAGPALS…RDPAASGDLS (63 aa)) are excised as a propeptide. Positions 131–155 (ARHEQQQQLLQQREQRGLESRDPAA) are disordered. The span at 143–152 (REQRGLESRD) shows a compositional bias: basic and acidic residues. An intrachain disulfide couples C165 to C171. Glycine amide is present on G173. Residues 177–207 (TLYSPWLERMNEVADDRSARNALCTRLGWRE) constitute a propeptide that is removed on maturation.

In terms of tissue distribution, expressed by the venom duct.

The protein localises to the secreted. In terms of biological role, in contrast to other members of the CCAP family which are cardio-accelerators, conoCAP-a decreases the heart frequency in Drosophila larvae (26%), rats and zebrafish embryos. It also reduces the blood pressure in rats. It decreases systolic calcium in ventricular cardiac myocytes, indicating that it may act via impairment of intracellular calcium trafficking. Functionally, synthetic conoCAP-b decreases the heart frequency of 23% in Drosophila larvae. Its function is as follows. Synthetic conoCAP-c decreases the heart frequency of 12% in Drosophila larvae. This Conus villepinii (Villepin's cone) protein is ConoCAP (conoCAP).